The primary structure comprises 688 residues: UvrABC system protein C (688 aa).

Residues 1–14 are compositionally biased toward basic and acidic residues; that stretch reads MSPLDQKNKPRGGA. Residues 1–20 are disordered; sequence MSPLDQKNKPRGGADDLPPE. A GIY-YIG domain is found at 71–149; the sequence is NAPGVYRMMN…IKRLRPRFNV (79 aa). A UVR domain is found at 259 to 294; that stretch reads QKVKTEISAAMQQASEDLDFERAAIYRDRLAALSHV.

It belongs to the UvrC family. In terms of assembly, interacts with UvrB in an incision complex.

It localises to the cytoplasm. The UvrABC repair system catalyzes the recognition and processing of DNA lesions. UvrC both incises the 5' and 3' sides of the lesion. The N-terminal half is responsible for the 3' incision and the C-terminal half is responsible for the 5' incision. The polypeptide is UvrABC system protein C (Mesorhizobium japonicum (strain LMG 29417 / CECT 9101 / MAFF 303099) (Mesorhizobium loti (strain MAFF 303099))).